The sequence spans 98 residues: DNA-directed RNA polymerase subunit omega (98 aa).

The protein belongs to the RNA polymerase subunit omega family. The RNAP catalytic core consists of 2 alpha, 1 beta, 1 beta' and 1 omega subunit. When a sigma factor is associated with the core the holoenzyme is formed, which can initiate transcription.

It catalyses the reaction RNA(n) + a ribonucleoside 5'-triphosphate = RNA(n+1) + diphosphate. Functionally, promotes RNA polymerase assembly. Latches the N- and C-terminal regions of the beta' subunit thereby facilitating its interaction with the beta and alpha subunits. The protein is DNA-directed RNA polymerase subunit omega of Tropheryma whipplei (strain Twist) (Whipple's bacillus).